The primary structure comprises 348 residues: Dihydroorotase (348 aa).

Zn(2+) is bound by residues histidine 17 and histidine 19. Substrate is bound by residues 19–21 and asparagine 45; that span reads HLR. Lysine 103, histidine 140, and histidine 178 together coordinate Zn(2+). An N6-carboxylysine modification is found at lysine 103. Histidine 140 is a binding site for substrate. Leucine 223 provides a ligand contact to substrate. Aspartate 251 provides a ligand contact to Zn(2+). The active site involves aspartate 251. Positions 255 and 267 each coordinate substrate.

This sequence belongs to the metallo-dependent hydrolases superfamily. DHOase family. Class II DHOase subfamily. Homodimer. Zn(2+) is required as a cofactor.

It catalyses the reaction (S)-dihydroorotate + H2O = N-carbamoyl-L-aspartate + H(+). It participates in pyrimidine metabolism; UMP biosynthesis via de novo pathway; (S)-dihydroorotate from bicarbonate: step 3/3. In terms of biological role, catalyzes the reversible cyclization of carbamoyl aspartate to dihydroorotate. The protein is Dihydroorotase of Salmonella paratyphi A (strain ATCC 9150 / SARB42).